Consider the following 266-residue polypeptide: MKTFAAYVIIACLSSTALAGSITENTSWNKEFSAEAVNGVFVLCKSSSKSCATNDLARASKEYLPASTFKIPNAIIGLETGVIKNEHQVFKWDGKPRAMKQWERDLTLRGAIQVSAVPVFQQIAREVGEVRMQKYLKKFSYGNQNISGGIDKFWLEGQLRISAVNQVEFLESLYLNKLSASKENQLIVKEALVTEAAPEYLVHSKTGFSGVGTESNPGVAWWVGWVEKETEVYFFAFNMDIDNESKLPLRKSIPTKIMESEGIIGG.

An N-terminal signal peptide occupies residues M1–A19. Cysteines 44 and 51 form a disulfide. Catalysis depends on S67, which acts as the Acyl-ester intermediate. The residue at position 70 (K70) is an N6-carboxylysine. A beta-lactam-binding residues include S115, T206, F208, and R250.

This sequence belongs to the class-D beta-lactamase family. As to quaternary structure, dimer.

It localises to the periplasm. It catalyses the reaction a beta-lactam + H2O = a substituted beta-amino acid. Its activity is regulated as follows. Activated, with respect to most beta-lactam substrates, in the presence of 0.05 M sodium bicarbonate. In terms of biological role, class D beta-lactamase which confers resistance to the beta-lactam antibiotics, including penicillin, carbenicillin and oxacillin, and also some cephalosporins. Confers weak resistance to some carbapenems, in E.coli strain C600Z1. Acts via hydrolysis of the beta-lactam ring. Has penicillin- and cephalosporin-hydrolyzing activities. The sequence is that of Beta-lactamase OXA-10 from Pseudomonas aeruginosa.